The primary structure comprises 1226 residues: Probable phosphorylase b kinase regulatory subunit alpha (1226 aa).

The segment at 666–688 (NEKITTPRGPRTLRRGESVKDRS) is disordered. Residues 679–688 (RRGESVKDRS) are compositionally biased toward basic and acidic residues.

Belongs to the phosphorylase b kinase regulatory chain family.

It participates in glycan biosynthesis; glycogen metabolism. Functionally, phosphorylase b kinase catalyzes the phosphorylation of serine in certain substrates, including troponin I. The alpha chain may bind calmodulin. This is Probable phosphorylase b kinase regulatory subunit alpha from Caenorhabditis elegans.